We begin with the raw amino-acid sequence, 488 residues long: Altronate oxidoreductase (488 aa).

18–29 (VIQFGEGNFLRA) provides a ligand contact to NAD(+).

Belongs to the mannitol dehydrogenase family. UxaB subfamily.

It catalyses the reaction D-altronate + NAD(+) = keto-D-tagaturonate + NADH + H(+). It functions in the pathway carbohydrate metabolism; pentose and glucuronate interconversion. In Pectobacterium carotovorum subsp. carotovorum (strain PC1), this protein is Altronate oxidoreductase.